The sequence spans 90 residues: Small ribosomal subunit protein uS15c (90 aa).

Residues 1-11 (MVKNSFSSVIS) are compositionally biased toward polar residues. The segment at 1–20 (MVKNSFSSVISQEEKKENGG) is disordered.

The protein belongs to the universal ribosomal protein uS15 family. In terms of assembly, part of the 30S ribosomal subunit.

It localises to the plastid. The protein localises to the chloroplast. The protein is Small ribosomal subunit protein uS15c (rps15) of Cucumis sativus (Cucumber).